The primary structure comprises 610 residues: UvrABC system protein C (610 aa).

The 79-residue stretch at 16 to 94 (HQPGVYRMYN…IKQYLPKYNV (79 aa)) folds into the GIY-YIG domain. The 36-residue stretch at 204 to 239 (QQVLKQLIEKMEVASQQLRFEDAAKFRDQIQAIRRV) folds into the UVR domain.

This sequence belongs to the UvrC family. In terms of assembly, interacts with UvrB in an incision complex.

Its subcellular location is the cytoplasm. Its function is as follows. The UvrABC repair system catalyzes the recognition and processing of DNA lesions. UvrC both incises the 5' and 3' sides of the lesion. The N-terminal half is responsible for the 3' incision and the C-terminal half is responsible for the 5' incision. In Vibrio parahaemolyticus serotype O3:K6 (strain RIMD 2210633), this protein is UvrABC system protein C.